The sequence spans 165 residues: Growth arrest and DNA damage-inducible protein GADD45 alpha (165 aa).

The residue at position 2 (Thr2) is a Phosphothreonine.

Belongs to the GADD45 family. Interacts with AURKA, PCNA, GADD45GIP1 and MAPK14.

It localises to the nucleus. Might affect PCNA interaction with some CDK (cell division protein kinase) complexes; stimulates DNA excision repair in vitro and inhibits entry of cells into S phase. In T-cells, functions as a regulator of p38 MAPKs by inhibiting p88 phosphorylation and activity. This chain is Growth arrest and DNA damage-inducible protein GADD45 alpha (GADD45A), found in Cricetulus griseus (Chinese hamster).